Consider the following 462-residue polypeptide: Fumarate hydratase class II (462 aa).

Substrate is bound by residues 97–99 (SGT), 127–130 (HPND), 137–139 (SSN), and Thr-185. Residue His-186 is the Proton donor/acceptor of the active site. The active site involves Ser-316. Substrate is bound by residues Ser-317 and 322–324 (KVN).

This sequence belongs to the class-II fumarase/aspartase family. Fumarase subfamily. In terms of assembly, homotetramer.

The protein resides in the cytoplasm. The enzyme catalyses (S)-malate = fumarate + H2O. It functions in the pathway carbohydrate metabolism; tricarboxylic acid cycle; (S)-malate from fumarate: step 1/1. In terms of biological role, involved in the TCA cycle. Catalyzes the stereospecific interconversion of fumarate to L-malate. This is Fumarate hydratase class II from Bacillus cereus (strain ATCC 14579 / DSM 31 / CCUG 7414 / JCM 2152 / NBRC 15305 / NCIMB 9373 / NCTC 2599 / NRRL B-3711).